The primary structure comprises 439 residues: uncharacterized protein (439 aa).

The 55-residue stretch at 1-55 folds into the TRAM domain; that stretch reads MLEQVRIQKMVNGGYGLAHLSNGKVVLVEGAYPGEEVLIKTYREKRDFSFGKVVS. [4Fe-4S] cluster is bound by residues Cys-68, Cys-74, Cys-77, and Cys-149. 4 residues coordinate S-adenosyl-L-methionine: Gln-272, Tyr-301, Glu-322, and Asp-367. Cys-394 functions as the Nucleophile in the catalytic mechanism.

It belongs to the class I-like SAM-binding methyltransferase superfamily. RNA M5U methyltransferase family.

This is an uncharacterized protein from Thermotoga maritima (strain ATCC 43589 / DSM 3109 / JCM 10099 / NBRC 100826 / MSB8).